A 127-amino-acid polypeptide reads, in one-letter code: Small ribosomal subunit protein uS13 (127 aa).

The segment covering Leu-96–Val-118 has biased composition (basic residues). Residues Leu-96–Arg-127 are disordered.

Belongs to the universal ribosomal protein uS13 family. Part of the 30S ribosomal subunit. Forms a loose heterodimer with protein S19. Forms two bridges to the 50S subunit in the 70S ribosome.

Functionally, located at the top of the head of the 30S subunit, it contacts several helices of the 16S rRNA. In the 70S ribosome it contacts the 23S rRNA (bridge B1a) and protein L5 of the 50S subunit (bridge B1b), connecting the 2 subunits; these bridges are implicated in subunit movement. Contacts the tRNAs in the A and P-sites. The protein is Small ribosomal subunit protein uS13 of Myxococcus xanthus (strain DK1622).